The primary structure comprises 1153 residues: Error-prone DNA polymerase (1153 aa).

Disordered stretches follow at residues 1 to 39 (MFYS…QAQP) and 64 to 89 (VGEG…GASQ).

This sequence belongs to the DNA polymerase type-C family. DnaE2 subfamily.

It localises to the cytoplasm. The catalysed reaction is DNA(n) + a 2'-deoxyribonucleoside 5'-triphosphate = DNA(n+1) + diphosphate. Functionally, DNA polymerase involved in damage-induced mutagenesis and translesion synthesis (TLS). It is not the major replicative DNA polymerase. In Corynebacterium jeikeium (strain K411), this protein is Error-prone DNA polymerase.